A 435-amino-acid chain; its full sequence is Serine carboxypeptidase-like 12 (435 aa).

The N-terminal stretch at 1-21 is a signal peptide; the sequence is MKSTPKLLLLLLFIINHHVDS. Disulfide bonds link cysteine 80–cysteine 323, cysteine 244–cysteine 258, and cysteine 282–cysteine 289. The N-linked (GlcNAc...) asparagine glycan is linked to asparagine 101. The active site involves serine 176. N-linked (GlcNAc...) asparagine glycans are attached at residues asparagine 313, asparagine 336, and asparagine 344. Aspartate 360 is a catalytic residue. The N-linked (GlcNAc...) asparagine glycan is linked to asparagine 376. Residue histidine 413 is part of the active site. An N-linked (GlcNAc...) asparagine glycan is attached at asparagine 420.

This sequence belongs to the peptidase S10 family. Expressed in roots.

It localises to the secreted. In terms of biological role, probable carboxypeptidase. The sequence is that of Serine carboxypeptidase-like 12 (SCPL12) from Arabidopsis thaliana (Mouse-ear cress).